Consider the following 393-residue polypeptide: Formate-dependent phosphoribosylglycinamide formyltransferase (393 aa).

Residues 22–23 (EL) and E82 each bind N(1)-(5-phospho-beta-D-ribosyl)glycinamide. ATP is bound by residues R114, K155, 160 to 165 (SSGKGQ), 195 to 198 (EGFV), and E203. The 190-residue stretch at 119–308 (RLAAEELGLP…EFALHVRAFT (190 aa)) folds into the ATP-grasp domain. Positions 267 and 279 each coordinate Mg(2+). N(1)-(5-phospho-beta-D-ribosyl)glycinamide-binding positions include D286, K356, and 363 to 364 (RR).

Belongs to the PurK/PurT family. As to quaternary structure, homodimer.

The enzyme catalyses N(1)-(5-phospho-beta-D-ribosyl)glycinamide + formate + ATP = N(2)-formyl-N(1)-(5-phospho-beta-D-ribosyl)glycinamide + ADP + phosphate + H(+). It functions in the pathway purine metabolism; IMP biosynthesis via de novo pathway; N(2)-formyl-N(1)-(5-phospho-D-ribosyl)glycinamide from N(1)-(5-phospho-D-ribosyl)glycinamide (formate route): step 1/1. Its function is as follows. Involved in the de novo purine biosynthesis. Catalyzes the transfer of formate to 5-phospho-ribosyl-glycinamide (GAR), producing 5-phospho-ribosyl-N-formylglycinamide (FGAR). Formate is provided by PurU via hydrolysis of 10-formyl-tetrahydrofolate. The sequence is that of Formate-dependent phosphoribosylglycinamide formyltransferase from Vibrio cholerae serotype O1 (strain M66-2).